Reading from the N-terminus, the 33-residue chain is Brevinin-2Ea (33 aa).

Cysteine 27 and cysteine 33 form a disulfide bridge.

It belongs to the frog skin active peptide (FSAP) family. Brevinin subfamily. Expressed by the skin glands.

The protein resides in the secreted. In terms of biological role, shows antibacterial activity against representative Gram-negative and Gram-positive bacterial species, and hemolytic activity. This is Brevinin-2Ea from Pelophylax lessonae (Pool frog).